The primary structure comprises 337 residues: MSIPSLDYRLFSHGDPAQRQQFCEDLVKTFAGYGFAKLRNHGLSDERVDEAFSYSNKFFNLPLHIKQKAKHPEAPNPHRGYSGVGQEKISAITGFEKGERSEVRAAELRESWDQGPADDELYANRWMPDEDLPGYRSFMESFFVECQTLHQSLLQCIATGLSLPSDELSSRCAKCSAELRLNHYPATPASSLASGACRISPHSDFGTITLLFQDSVGGLQVEDQQNPGVFLPVEPDDVHEMIINVGDCLSRWTDGRLRSVNHRVVSPTRLPGDADVMIPERHSLAYFGKPSRDEVVDSLPLFVPEGCKPKFADRWTALEYNQSKLMRTYNVETAAQG.

The Fe2OG dioxygenase domain occupies 175 to 290; sequence CSAELRLNHY…RHSLAYFGKP (116 aa). Residues histidine 202, aspartate 204, and histidine 262 each coordinate Fe cation. Arginine 281 lines the 2-oxoglutarate pocket.

The protein belongs to the iron/ascorbate-dependent oxidoreductase family. Fe(2+) is required as a cofactor.

The protein operates within antifungal biosynthesis. 2-oxoglutarate-dependent dioxygenase; part of the gene cluster that mediates the biosynthesis of the antifungal antibiotic FR901469, an inhibitor of beta-1,3-glucansynthase, exerting antifungal activity against the pathogenes Candida albicans and Aspergillus fumigatus. FR901469 is a cyclic depsipeptide containing 12 amino acid residues and a fatty acid chain. The NRPS frbI contains 12 modules responsible for the formation of the depsipeptide backbone which is denoted as Acyl-Thr-Ala-Tyr-Val-4OHPro-Thr-Thr-3OHPro-threo3OHGln-Gly-Thr-Orn-OH (C71H116N14O23). The PKS frbB is probably involved in the production of the hydrocarbon chain, and the acyl-CoA ligase frbC might be involved in the transport of the chain to the peptide ptoduct of frbI. Because FR901469 contains 3 hydroxylated amino acid residues, the 3 oxygenases frbA, frbH, and frbJ might be participating in amino acid hydroxylation. As no thioesterase domains were detected in frbI or frbB, the thioesterases frbD and frbE may instead release and cyclize the products of the NRPS and PKS, respectively. The polypeptide is 2-oxoglutarate-dependent dioxygenase frbA (Dothideomycetidae sp. (strain 11243) (Fungal sp. (strain No.11243))).